Here is a 143-residue protein sequence, read N- to C-terminus: Transcriptional regulator MraZ (143 aa).

SpoVT-AbrB domains are found at residues 5–47 (TYTP…PREE) and 76–119 (TDEQ…DAQA).

It belongs to the MraZ family. In terms of assembly, forms oligomers.

It localises to the cytoplasm. The protein resides in the nucleoid. This is Transcriptional regulator MraZ from Rhodococcus jostii (strain RHA1).